Consider the following 440-residue polypeptide: 6-phospho-alpha-glucosidase (440 aa).

4–70 (FSIVVAGGGS…PDINFVYTTD (67 aa)) lines the NAD(+) pocket. Residues Arg-93 and Asn-147 each contribute to the substrate site. Cys-169 lines the Mn(2+) pocket. Asp-170 serves as the catalytic Proton donor. His-200 contributes to the Mn(2+) binding site. Residue Tyr-263 is the Proton acceptor of the active site. Position 283 (Arg-283) interacts with substrate.

This sequence belongs to the glycosyl hydrolase 4 family. In terms of assembly, homodimer. It depends on NAD(+) as a cofactor. Mn(2+) serves as cofactor.

It participates in glycan degradation; palatinose degradation. In vitro, readily hydrolyzes p-nitrophenyl-alpha-D-glucopyranoside 6-phosphate (pNPalphaG6P), a chromogenic analog of the phosphorylated isomers of sucrose. In vivo, is probably involved in the degradation of the 6-phosphate derivatives of the sucrose isomers trehalulose, turanose, maltulose and palatinose, catalyzing their hydrolysis into glucose 6-phosphate (G6P) and fructose, which allows the bacterium to use these sugars as energy sources for growth. Is not able to hydrolyze the C2 or C4 chromogenic stereomers (i.e. pNPalpha-mannopyranoside-6P and pNPalpha-galactopyranoside-6P, respectively). This is 6-phospho-alpha-glucosidase (pagL) from Leptotrichia buccalis (strain ATCC 14201 / DSM 1135 / JCM 12969 / NCTC 10249 / C-1013-b).